Consider the following 1459-residue polypeptide: PPE family protein PPE34 (1459 aa).

Belongs to the mycobacterial PPE family. Interacts with human TLR2.

It localises to the cell membrane. Its subcellular location is the secreted. The protein resides in the cell wall. The protein localises to the cell surface. Its function is as follows. Facilitates a shift in the ensuing immunity toward the Th2 phenotype and could aid in immune evasion by mycobacteria. Interacts with human Toll-like receptor 2 (TLR2) and triggers functional maturation of human dendritic cells (DCs), leading to secretion of IL-4, IL-5 and IL-10 from CD4(+) T cells and induction of Th2 immune response. Maturation of DCs involves PI3K, ERK1/2, p38 MAPK and NF-kappa-B signaling pathways. This is PPE family protein PPE34 from Mycobacterium tuberculosis (strain ATCC 25618 / H37Rv).